The following is a 440-amino-acid chain: Thymidine phosphorylase (440 aa).

The protein belongs to the thymidine/pyrimidine-nucleoside phosphorylase family. In terms of assembly, homodimer.

It carries out the reaction thymidine + phosphate = 2-deoxy-alpha-D-ribose 1-phosphate + thymine. Its pathway is pyrimidine metabolism; dTMP biosynthesis via salvage pathway; dTMP from thymine: step 1/2. In terms of biological role, the enzymes which catalyze the reversible phosphorolysis of pyrimidine nucleosides are involved in the degradation of these compounds and in their utilization as carbon and energy sources, or in the rescue of pyrimidine bases for nucleotide synthesis. In Yersinia pestis, this protein is Thymidine phosphorylase.